We begin with the raw amino-acid sequence, 124 residues long: Small ribosomal subunit protein uS12 (124 aa).

The residue at position 89 (Asp-89) is a 3-methylthioaspartic acid.

Belongs to the universal ribosomal protein uS12 family. In terms of assembly, part of the 30S ribosomal subunit. Contacts proteins S8 and S17. May interact with IF1 in the 30S initiation complex.

In terms of biological role, with S4 and S5 plays an important role in translational accuracy. Its function is as follows. Interacts with and stabilizes bases of the 16S rRNA that are involved in tRNA selection in the A site and with the mRNA backbone. Located at the interface of the 30S and 50S subunits, it traverses the body of the 30S subunit contacting proteins on the other side and probably holding the rRNA structure together. The combined cluster of proteins S8, S12 and S17 appears to hold together the shoulder and platform of the 30S subunit. The sequence is that of Small ribosomal subunit protein uS12 from Yersinia enterocolitica serotype O:8 / biotype 1B (strain NCTC 13174 / 8081).